The following is a 257-amino-acid chain: Imidazole glycerol phosphate synthase subunit HisF (257 aa).

Catalysis depends on residues D11 and D130.

The protein belongs to the HisA/HisF family. Heterodimer of HisH and HisF.

It localises to the cytoplasm. The catalysed reaction is 5-[(5-phospho-1-deoxy-D-ribulos-1-ylimino)methylamino]-1-(5-phospho-beta-D-ribosyl)imidazole-4-carboxamide + L-glutamine = D-erythro-1-(imidazol-4-yl)glycerol 3-phosphate + 5-amino-1-(5-phospho-beta-D-ribosyl)imidazole-4-carboxamide + L-glutamate + H(+). Its pathway is amino-acid biosynthesis; L-histidine biosynthesis; L-histidine from 5-phospho-alpha-D-ribose 1-diphosphate: step 5/9. IGPS catalyzes the conversion of PRFAR and glutamine to IGP, AICAR and glutamate. The HisF subunit catalyzes the cyclization activity that produces IGP and AICAR from PRFAR using the ammonia provided by the HisH subunit. In Aliivibrio salmonicida (strain LFI1238) (Vibrio salmonicida (strain LFI1238)), this protein is Imidazole glycerol phosphate synthase subunit HisF.